Reading from the N-terminus, the 374-residue chain is Ribosomal RNA large subunit methyltransferase G (374 aa).

Belongs to the methyltransferase superfamily. RlmG family.

Its subcellular location is the cytoplasm. It carries out the reaction guanosine(1835) in 23S rRNA + S-adenosyl-L-methionine = N(2)-methylguanosine(1835) in 23S rRNA + S-adenosyl-L-homocysteine + H(+). Its function is as follows. Specifically methylates the guanine in position 1835 (m2G1835) of 23S rRNA. The protein is Ribosomal RNA large subunit methyltransferase G of Photobacterium profundum (strain SS9).